The primary structure comprises 122 residues: Large ribosomal subunit protein uL18 (122 aa).

The interval 1 to 24 (MSTLSRKQQTQKRHRRLRRHLSGT) is disordered. The segment covering 9-21 (QTQKRHRRLRRHL) has biased composition (basic residues).

The protein belongs to the universal ribosomal protein uL18 family. In terms of assembly, part of the 50S ribosomal subunit; part of the 5S rRNA/L5/L18/L25 subcomplex. Contacts the 5S and 23S rRNAs.

In terms of biological role, this is one of the proteins that bind and probably mediate the attachment of the 5S RNA into the large ribosomal subunit, where it forms part of the central protuberance. This Synechococcus sp. (strain WH7803) protein is Large ribosomal subunit protein uL18.